The chain runs to 394 residues: MTNRDRIGLTWISFFSYALTGAVVIVTGMVLENIAAYFQLPVAQMSNTFTFLNAGILLAVFLNAWLMEIVPLKRQLIFGFVLMVLAVLGLMNSHSLSVFSLCMFVLGVVSGITMSIGTFLITHLYEGRQRGSRLLFTDSFFSMAGTLFPIIAAAILARSLPWYWVYACIGVIYVAIFILALCFEFPQLGKKAVQGQPVAKEKWGLGVALLAVAALCYILGQLGFIGWVPQYATKNMGMDITEAGSVVGYFWTAYMIGMWAFSAILRFFDPQRIVTALALASTLLMYWFINTTDASMLKWIIMGLGFFSSAIYTTIITLGSLQTKVSSPKLVNFILTCGTIGTMLTFVVTGPIVDKAGFHAALATTNSLYAVVFLMCLLLGFVSKHKQHGHMDPH.

12 consecutive transmembrane segments (helical) span residues 11–31 (WISF…GMVL), 51–71 (FLNA…EIVP), 76–96 (LIFG…SHSL), 101–121 (LCMF…TFLI), 135–155 (LFTD…AAAI), 163–183 (YWVY…ALCF), 205–225 (LGVA…LGFI), 245–265 (SVVG…SAIL), 273–293 (IVTA…NTTD), 299–319 (WIIM…ITLG), 333–353 (FILT…GPIV), and 362–382 (LATT…LGFV).

The protein belongs to the major facilitator superfamily. TsgA family.

It is found in the cell inner membrane. This chain is Protein TsgA homolog, found in Erwinia tasmaniensis (strain DSM 17950 / CFBP 7177 / CIP 109463 / NCPPB 4357 / Et1/99).